The primary structure comprises 366 residues: S-adenosylmethionine:tRNA ribosyltransferase-isomerase (366 aa).

It belongs to the QueA family. In terms of assembly, monomer.

It localises to the cytoplasm. It catalyses the reaction 7-aminomethyl-7-carbaguanosine(34) in tRNA + S-adenosyl-L-methionine = epoxyqueuosine(34) in tRNA + adenine + L-methionine + 2 H(+). It functions in the pathway tRNA modification; tRNA-queuosine biosynthesis. Functionally, transfers and isomerizes the ribose moiety from AdoMet to the 7-aminomethyl group of 7-deazaguanine (preQ1-tRNA) to give epoxyqueuosine (oQ-tRNA). The polypeptide is S-adenosylmethionine:tRNA ribosyltransferase-isomerase (Caulobacter vibrioides (strain ATCC 19089 / CIP 103742 / CB 15) (Caulobacter crescentus)).